The following is a 321-amino-acid chain: Transaldolase (321 aa).

Lysine 132 serves as the catalytic Schiff-base intermediate with substrate.

This sequence belongs to the transaldolase family. Type 1 subfamily. Homodimer.

Its subcellular location is the cytoplasm. It carries out the reaction D-sedoheptulose 7-phosphate + D-glyceraldehyde 3-phosphate = D-erythrose 4-phosphate + beta-D-fructose 6-phosphate. It functions in the pathway carbohydrate degradation; pentose phosphate pathway; D-glyceraldehyde 3-phosphate and beta-D-fructose 6-phosphate from D-ribose 5-phosphate and D-xylulose 5-phosphate (non-oxidative stage): step 2/3. Functionally, transaldolase is important for the balance of metabolites in the pentose-phosphate pathway. The sequence is that of Transaldolase from Rhizobium rhizogenes (strain K84 / ATCC BAA-868) (Agrobacterium radiobacter).